A 200-amino-acid polypeptide reads, in one-letter code: A-type ATP synthase subunit E 3 (200 aa).

Belongs to the V-ATPase E subunit family. As to quaternary structure, has multiple subunits with at least A(3), B(3), C, D, E, F, H, I and proteolipid K(x).

The protein resides in the cell membrane. Functionally, component of the A-type ATP synthase that produces ATP from ADP in the presence of a proton gradient across the membrane. The sequence is that of A-type ATP synthase subunit E 3 from Methanospirillum hungatei JF-1 (strain ATCC 27890 / DSM 864 / NBRC 100397 / JF-1).